A 660-amino-acid polypeptide reads, in one-letter code: Acetyl-coenzyme A synthetase (660 aa).

CoA is bound by residues 197–200 and Thr-317; that span reads RGGK. ATP-binding positions include 397 to 399, 421 to 426, Asp-512, and Arg-528; these read GEP and DTFWQT. A CoA-binding site is contributed by Ser-536. Arg-539 is an ATP binding site. Val-550 and Val-555 together coordinate Mg(2+). The residue at position 625 (Lys-625) is an N6-acetyllysine.

Belongs to the ATP-dependent AMP-binding enzyme family. The cofactor is Mg(2+). In terms of processing, acetylated. Deacetylation by the SIR2-homolog deacetylase activates the enzyme.

The catalysed reaction is acetate + ATP + CoA = acetyl-CoA + AMP + diphosphate. Functionally, catalyzes the conversion of acetate into acetyl-CoA (AcCoA), an essential intermediate at the junction of anabolic and catabolic pathways. AcsA undergoes a two-step reaction. In the first half reaction, AcsA combines acetate with ATP to form acetyl-adenylate (AcAMP) intermediate. In the second half reaction, it can then transfer the acetyl group from AcAMP to the sulfhydryl group of CoA, forming the product AcCoA. This Cupriavidus taiwanensis (strain DSM 17343 / BCRC 17206 / CCUG 44338 / CIP 107171 / LMG 19424 / R1) (Ralstonia taiwanensis (strain LMG 19424)) protein is Acetyl-coenzyme A synthetase.